The primary structure comprises 581 residues: Proline--tRNA ligase (581 aa).

Belongs to the class-II aminoacyl-tRNA synthetase family. ProS type 1 subfamily. As to quaternary structure, homodimer.

The protein localises to the cytoplasm. The enzyme catalyses tRNA(Pro) + L-proline + ATP = L-prolyl-tRNA(Pro) + AMP + diphosphate. In terms of biological role, catalyzes the attachment of proline to tRNA(Pro) in a two-step reaction: proline is first activated by ATP to form Pro-AMP and then transferred to the acceptor end of tRNA(Pro). As ProRS can inadvertently accommodate and process non-cognate amino acids such as alanine and cysteine, to avoid such errors it has two additional distinct editing activities against alanine. One activity is designated as 'pretransfer' editing and involves the tRNA(Pro)-independent hydrolysis of activated Ala-AMP. The other activity is designated 'posttransfer' editing and involves deacylation of mischarged Ala-tRNA(Pro). The misacylated Cys-tRNA(Pro) is not edited by ProRS. This is Proline--tRNA ligase from Methylibium petroleiphilum (strain ATCC BAA-1232 / LMG 22953 / PM1).